Consider the following 359-residue polypeptide: 4-galactosyl-N-acetylglucosaminide 3-alpha-L-fucosyltransferase 9 (359 aa).

The Cytoplasmic segment spans residues Met-1 to Pro-11. A helical; Signal-anchor for type II membrane protein membrane pass occupies residues Phe-12–Pro-32. At Thr-33 to Asn-359 the chain is on the lumenal side. N-linked (GlcNAc...) asparagine glycosylation occurs at Asn-62. Residues Glu-63–Tyr-168 form an acceptor-binding region. Residue Gln-75 coordinates a beta-D-galactosyl-(1-&gt;4)-N-acetyl-beta-D-glucosaminyl derivative. Disulfide bonds link Cys-82/Cys-335, Cys-91/Cys-338, and Cys-190/Cys-238. N-linked (GlcNAc...) asparagine glycosylation is present at Asn-101. Glu-137 is an a beta-D-galactosyl-(1-&gt;4)-N-acetyl-beta-D-glucosaminyl derivative binding site. The active-site Nucleophile is the Glu-137. A GDP-beta-L-fucose-binding site is contributed by Glu-137. Asn-153 carries an N-linked (GlcNAc...) asparagine glycan. Positions 168, 192, 194, 195, 202, 226, 241, 246, 252, 255, and 256 each coordinate GDP-beta-L-fucose. Residues Gly-169–Leu-326 are donor-binding. Positions Pro-327–Asn-359 are acceptor-binding.

It belongs to the glycosyltransferase 10 family. Homodimer. Post-translationally, N-glycosylated with complex-type N-glycans.

It is found in the golgi apparatus. The protein resides in the trans-Golgi network membrane. The protein localises to the golgi apparatus membrane. It carries out the reaction a beta-D-galactosyl-(1-&gt;4)-N-acetyl-beta-D-glucosaminyl derivative + GDP-beta-L-fucose = a beta-D-galactosyl-(1-&gt;4)-[alpha-L-fucosyl-(1-&gt;3)]-N-acetyl-beta-D-glucosaminyl derivative + GDP + H(+). The enzyme catalyses an alpha-Neu5Ac-(2-&gt;3)-beta-D-Gal-(1-&gt;4)-beta-D-GlcNAc-(1-&gt;3)-beta-D-Gal-(1-&gt;4)-beta-D-GlcNAc derivative + GDP-beta-L-fucose = an alpha-Neu5Ac-(2-&gt;3)-beta-D-Gal-(1-&gt;4)-beta-D-GlcNAc-(1-&gt;3)-beta-D-Gal-(1-&gt;4)-[alpha-L-Fuc-(1-&gt;3)]-beta-D-GlcNAc derivative + GDP + H(+). It catalyses the reaction alpha-N-glycoloylneuraminosyl-(2-&gt;3)-beta-D-galactosyl-(1-&gt;4)-N-acetyl-beta-D-glucosaminyl-(1-&gt;3)-beta-D-galactosyl-(1-&gt;4)-N-acetyl-beta-D-glucosaminyl-(1-&gt;3)-beta-D-galactosyl-(1-&gt;4)-beta-D-glucosyl-(1&lt;-&gt;1')-ceramide + GDP-beta-L-fucose = alpha-N-glycoloylneuraminosyl-(2-&gt;3)-beta-D-galactosyl-(1-&gt;4)-N-acetyl-beta-D-glucosaminyl-(1-&gt;3)-beta-D-galactosyl-(1-&gt;4)-[alpha-L-fucosyl-(1-&gt;3)]-N-acetyl-beta-D-glucosaminyl-(1-&gt;3)-beta-D-galactosyl-(1-&gt;4)-beta-D-glucosyl-(1&lt;-&gt;1')-ceramide + GDP + H(+). The catalysed reaction is alpha-D-galactosyl-(1-&gt;3)-beta-D-galactosyl-(1-&gt;4)-N-acetyl-beta-D-glucosaminyl-(1-&gt;3)-beta-D-galactosyl-(1-&gt;4)-beta-D-glucosyl-(1&lt;-&gt;1')-ceramide + GDP-beta-L-fucose = a neolactoside IV(3)-alpha-Gal,III(3)-alpha-Fuc-nLc4Cer + GDP + H(+). It carries out the reaction a neolactoside nLc4Cer + GDP-beta-L-fucose = a neolactoside III(3)-alpha-Fuc-nLc4Cer + GDP + H(+). The enzyme catalyses an N-acetyl-alpha-neuraminyl-(2-&gt;3)-beta-D-galactosyl-(1-&gt;4)-N-acetyl-beta-D-glucosaminyl derivative + GDP-beta-L-fucose = an alpha-Neu5Ac-(2-&gt;3)-beta-D-Gal-(1-&gt;4)-[alpha-L-Fuc-(1-&gt;3)]-beta-D-GlcNAc derivative + GDP + H(+). It catalyses the reaction beta-D-Gal-(1-&gt;4)-beta-D-GlcNAc-(1-&gt;3)-beta-D-Gal-(1-&gt;4)-D-Glc + GDP-beta-L-fucose = beta-D-Gal-(1-&gt;4)-[alpha-L-Fuc-(1-&gt;3)]-beta-D-GlcNAc-(1-&gt;3)-beta-D-Gal-(1-&gt;4)-D-Glc + GDP + H(+). The catalysed reaction is an alpha-L-Fuc-(1-&gt;2)-beta-D-Gal-(1-&gt;4)-beta-D-GlcNAc derivative + GDP-beta-L-fucose = an alpha-L-Fuc-(1-&gt;2)-beta-D-Gal-(1-&gt;4)-[alpha-L-Fuc-(1-&gt;3)]-beta-D-GlcNAc derivative + GDP + H(+). It functions in the pathway protein modification; protein glycosylation. The protein operates within glycolipid biosynthesis. With respect to regulation, activated by Mn2+. In terms of biological role, catalyzes alpha(1-&gt;3) linkage of fucosyl moiety transferred from GDP-beta-L-fucose to N-acetyl glucosamine (GlcNAc) within type 2 lactosamine (LacNAc, beta-D-Gal-(1-&gt;4)-beta-D-GlcNAc-) glycan attached to glycolipids and N- or O-linked glycoproteins. Fucosylates distal type 2 LacNAc and its fucosylated (H-type 2 LacNAc) and sialylated (sialyl-type 2 LacNAc) derivatives to form Lewis x (Lex) (CD15) and Lewis y (Ley) antigenic epitopes involved in cell adhesion and differentiation. Generates Lex epitopes in the brain, presumably playing a role in the maintenance of neuronal stemness and neurite outgrowth in progenitor neural cells. Fucosylates the internal type 2 LacNAc unit of the polylactosamine chain to form VIM-2 antigen that serves as recognition epitope for SELE. Can also modify milk oligosaccharides in particular type 2 tetrasaccharide LNnT. This Rattus norvegicus (Rat) protein is 4-galactosyl-N-acetylglucosaminide 3-alpha-L-fucosyltransferase 9.